The sequence spans 92 residues: RIIa domain-containing protein 1 (92 aa).

The RIIa domain maps to 43–77; that stretch reads KEVEWLISGFFREIFLKRPDNILEFAADYFTDPRL.

The protein is RIIa domain-containing protein 1 (RIIAD1) of Homo sapiens (Human).